A 116-amino-acid chain; its full sequence is Small ribosomal subunit protein uS13 (116 aa).

The interval 92–116 (RRGLPVRGQNTKNNARTRKGAKRSR) is disordered. The span at 106–116 (ARTRKGAKRSR) shows a compositional bias: basic residues.

It belongs to the universal ribosomal protein uS13 family. Part of the 30S ribosomal subunit. Forms a loose heterodimer with protein S19. Forms two bridges to the 50S subunit in the 70S ribosome.

In terms of biological role, located at the top of the head of the 30S subunit, it contacts several helices of the 16S rRNA. In the 70S ribosome it contacts the 23S rRNA (bridge B1a) and protein L5 of the 50S subunit (bridge B1b), connecting the 2 subunits; these bridges are implicated in subunit movement. Contacts the tRNAs in the A and P-sites. This is Small ribosomal subunit protein uS13 from Lactobacillus delbrueckii subsp. bulgaricus (strain ATCC 11842 / DSM 20081 / BCRC 10696 / JCM 1002 / NBRC 13953 / NCIMB 11778 / NCTC 12712 / WDCM 00102 / Lb 14).